Reading from the N-terminus, the 91-residue chain is Alpha-elapitoxin-Oh2b (91 aa).

A signal peptide spans 1–21; that stretch reads MKTLLLTLVVMTIVCLDLGYT. 5 disulfide bridges follow: Cys-24-Cys-41, Cys-34-Cys-62, Cys-47-Cys-51, Cys-66-Cys-77, and Cys-78-Cys-83.

Belongs to the three-finger toxin family. Long-chain subfamily. Type II alpha-neurotoxin sub-subfamily. Monomer. Expressed by the venom gland.

The protein localises to the secreted. In terms of biological role, binds with high affinity to muscular (alpha-1/CHRNA1) and neuronal (alpha-7/CHRNA7) nicotinic acetylcholine receptor (nAChR) and inhibits acetylcholine from binding to the receptor, thereby impairing neuromuscular and neuronal transmission. Recombinant LNTX1 leads to a functional block of the muscle-type acetylcholine receptors. Has a cytotoxic activity. This neurotoxin is lethal. In Ophiophagus hannah (King cobra), this protein is Alpha-elapitoxin-Oh2b.